The chain runs to 332 residues: Ketol-acid reductoisomerase (NADP(+)) (332 aa).

The region spanning 1–182 (MAQVWKDAEI…GSARAGLIKT (182 aa)) is the KARI N-terminal Rossmann domain. Residues 25-28 (YGIQ), K48, S53, and 83-86 (DMIQ) contribute to the NADP(+) site. H108 is an active-site residue. Residue G134 participates in NADP(+) binding. The region spanning 183–329 (TFKEEVETDW…RKMRKMMWPD (147 aa)) is the KARI C-terminal knotted domain. The Mg(2+) site is built by D191, E195, E227, and E231. Residue S252 coordinates substrate.

It belongs to the ketol-acid reductoisomerase family. Mg(2+) serves as cofactor.

The enzyme catalyses (2R)-2,3-dihydroxy-3-methylbutanoate + NADP(+) = (2S)-2-acetolactate + NADPH + H(+). It catalyses the reaction (2R,3R)-2,3-dihydroxy-3-methylpentanoate + NADP(+) = (S)-2-ethyl-2-hydroxy-3-oxobutanoate + NADPH + H(+). It participates in amino-acid biosynthesis; L-isoleucine biosynthesis; L-isoleucine from 2-oxobutanoate: step 2/4. It functions in the pathway amino-acid biosynthesis; L-valine biosynthesis; L-valine from pyruvate: step 2/4. Involved in the biosynthesis of branched-chain amino acids (BCAA). Catalyzes an alkyl-migration followed by a ketol-acid reduction of (S)-2-acetolactate (S2AL) to yield (R)-2,3-dihydroxy-isovalerate. In the isomerase reaction, S2AL is rearranged via a Mg-dependent methyl migration to produce 3-hydroxy-3-methyl-2-ketobutyrate (HMKB). In the reductase reaction, this 2-ketoacid undergoes a metal-dependent reduction by NADPH to yield (R)-2,3-dihydroxy-isovalerate. This Cenarchaeum symbiosum (strain A) protein is Ketol-acid reductoisomerase (NADP(+)).